Consider the following 281-residue polypeptide: Elongation factor Ts (281 aa).

An involved in Mg(2+) ion dislocation from EF-Tu region spans residues 80 to 83 (TDFV).

Belongs to the EF-Ts family.

Its subcellular location is the cytoplasm. Associates with the EF-Tu.GDP complex and induces the exchange of GDP to GTP. It remains bound to the aminoacyl-tRNA.EF-Tu.GTP complex up to the GTP hydrolysis stage on the ribosome. In Vibrio campbellii (strain ATCC BAA-1116), this protein is Elongation factor Ts.